Here is a 519-residue protein sequence, read N- to C-terminus: T-complex protein 11-like protein 2 (519 aa).

The segment at 1 to 57 (MPFNGEKQCVSEDQPSDSDSSRFSESMASLSDYECSRQSFTSDSSSKSSSPASTSPP) is disordered. Phosphoserine is present on S16. Low complexity-rich tracts occupy residues 17-29 (DSDSSRFSESMAS) and 36-55 (SRQSFTSDSSSKSSSPASTS).

This sequence belongs to the TCP11 family. In terms of assembly, interacts with FMNL2; this interaction promotes muscle-derived satellite cell (MDSC) migration and differentiation.

It is found in the cytoplasm. It localises to the cytoskeleton. In terms of biological role, promotes the migration of muscle-derived satellite cells (MDSCs) during differentiation throught interaction with FMNL2 and therefore may participate in microfilament assembly. The chain is T-complex protein 11-like protein 2 from Bos taurus (Bovine).